A 787-amino-acid polypeptide reads, in one-letter code: Integrin beta-3 (787 aa).

A signal peptide spans 1–25 (MRTRRPGQLWATLLALGALAGVVVG). The Extracellular segment spans residues 27 to 717 (SNICTTRGVN…EEPECPKGPD (691 aa)). Positions 29–75 (ICTTRGVNSCQQCLAVSPVCAWCSDESLPQNSPRCNLKKNLLKDKCS) constitute a PSI domain. Disulfide bonds link Cys30–Cys48, Cys38–Cys460, Cys41–Cys63, Cys51–Cys74, Cys202–Cys209, Cys257–Cys298, Cys399–Cys411, Cys431–Cys458, Cys462–Cys482, Cys473–Cys485, Cys487–Cys496, Cys498–Cys528, Cys511–Cys526, Cys520–Cys531, Cys533–Cys546, Cys548–Cys569, Cys553–Cys567, Cys561–Cys572, and Cys574–Cys583. The VWFA domain occupies 134-376 (DYPVDIYYLM…QLIVDAYGKI (243 aa)). Mg(2+) is bound by residues Ser146 and Ser148. Positions 148, 151, 152, and 183 each coordinate Ca(2+). The segment at 202–209 (CYTMKSTC) is CX3CL1-binding. The tract at residues 202 to 209 (CYTMKSTC) is involved in CX3CL1-, NRG1-, FGF1- and IGF1-binding. The Ca(2+) site is built by Asn240, Asp242, Pro244, Glu245, and Asp276. Glu245 lines the Mg(2+) pocket. Residues 292–312 (LPNDGRCHIGPDNHYSASTTM) are CX3CL1-binding. N-linked (GlcNAc...) asparagine glycans are attached at residues Asn345 and Asn396. 4 consecutive I-EGF domains span residues 462–497 (CQAF…SMCE), 498–547 (CSEE…KYCE), 548–584 (CDDF…YYCN), and 585–624 (CTTR…DTCE). A glycan (N-linked (GlcNAc...) asparagine) is linked at Asn477. Asn584 carries N-linked (GlcNAc...) asparagine glycosylation. Cystine bridges form between Cys585–Cys608, Cys592–Cys606, Cys600–Cys611, Cys613–Cys623, Cys626–Cys629, Cys633–Cys680, Cys639–Cys660, Cys642–Cys656, and Cys688–Cys712. Residue Asn679 is glycosylated (N-linked (GlcNAc...) asparagine). The helical transmembrane segment at 718–738 (ILVVLLSVMGAILLIGLATLL) threads the bilayer. At 739 to 787 (IWKLLITIHDRKEFAKFEEERARAKWDTANNPLYKEATSTFTNITYRGT) the chain is on the cytoplasmic side. Phosphothreonine is present on Thr766. Tyr772 bears the Phosphotyrosine mark. Positions 776 to 782 (TSTFTNI) match the LIR motif. Thr778 is subject to Phosphothreonine. Tyr784 is modified (phosphotyrosine).

It belongs to the integrin beta chain family. In terms of assembly, heterodimer of an alpha and a beta subunit. Beta-3 (ITGB3) associates with either alpha-IIB (ITGA2B) or alpha-V (ITGAV). Interacts with FLNB and COMP. Interacts with PDIA6 following platelet stimulation. Interacts with SYK; upon activation by ITGB3 promotes platelet adhesion. Interacts with MYO10. Interacts with DAB2. Interacts with FERMT2. Integrin ITGAV:ITGB3 interacts with FBLN5 (via N-terminus). Interacts with EMP2; regulates the levels of the heterodimer ITGA5:ITGB3 integrin expression on the plasma membrane. ITGAV:ITGB3 interacts with CCN3. ITGAV:ITGB3 and ITGA2B:ITGB3 interact with SELP (via C-type lectin domain); the interaction mediates cell-cell interaction and adhesion. ITGAV:ITGB3 interacts with AGRA2. ITGAV:ITGB3 is found in a ternary complex with CX3CR1 and CX3CL1. ITGAV:ITGB3 is found in a ternary complex with NRG1 and ERBB3. ITGAV:ITGB3 is found in a ternary complex with FGF1 and FGFR1. ITGAV:ITGB3 interacts with FGF2; it is likely that FGF2 can simultaneously bind ITGAV:ITGB3 and FGF receptors. ITGAV:ITGB3 binds to IL1B. ITGAV:ITGB3 is found in a ternary complex with IGF1 and IGF1R. ITGAV:ITGB3 interacts with IGF2. ITGAV:ITGB3 interacts with FBN1. ITGAV:ITGB3 interacts with CD9, CD81 and CD151 (via second extracellular domain). Interacts (via the allosteric site (site 2)) with CXCL12 in a CXCR4-independent manner. Interacts with MXRA8/DICAM; the interaction inhibits ITGAV:ITGB3 heterodimer formation. ITGAV:ITGB3 interacts with PTN. Forms a complex with PTPRZ1 and PTN that stimulates endothelial cell migration through ITGB3 Tyr-772 phosphorylation. ITGAV:ITGB3 interacts with SLC6A4. Interacts with SLC6A4 (via C-terminus); this interaction regulates SLC6A4 trafficking. ITGA2B:ITGB3 interacts with PPIA/CYPA; the interaction is ROS and PPIase activity-dependent and is increased in the presence of thrombin. Interacts with tensin TNS3; TNS3 also interacts with PEAK1, thus acting as an adapter molecule to bridge the association of PEAK1 with ITGB3. Interacts with TM4SF19. Post-translationally, phosphorylated on tyrosine residues in response to thrombin-induced platelet aggregation. Probably involved in outside-in signaling.

The protein resides in the cell membrane. Its subcellular location is the cell projection. It is found in the lamellipodium membrane. It localises to the cell junction. The protein localises to the focal adhesion. The protein resides in the postsynaptic cell membrane. Its subcellular location is the synapse. Its function is as follows. Integrin alpha-V/beta-3 (ITGAV:ITGB3) is a receptor for cytotactin, fibronectin, laminin, matrix metalloproteinase-2, osteopontin, osteomodulin, prothrombin, thrombospondin, vitronectin and von Willebrand factor. Integrin alpha-IIB/beta-3 (ITGA2B:ITGB3) is a receptor for fibronectin, fibrinogen, plasminogen, prothrombin, thrombospondin and vitronectin. Integrins alpha-IIB/beta-3 and alpha-V/beta-3 recognize the sequence R-G-D in a wide array of ligands. Integrin alpha-IIB/beta-3 recognizes the sequence H-H-L-G-G-G-A-K-Q-A-G-D-V in fibrinogen gamma chain. Following activation integrin alpha-IIB/beta-3 brings about platelet/platelet interaction through binding of soluble fibrinogen. This step leads to rapid platelet aggregation which physically plugs ruptured endothelial surfaces. Fibrinogen binding enhances SELP expression in activated platelets. ITGAV:ITGB3 binds to fractalkine (CX3CL1) and acts as its coreceptor in CX3CR1-dependent fractalkine signaling. ITGAV:ITGB3 binds to NRG1 (via EGF domain) and this binding is essential for NRG1-ERBB signaling. ITGAV:ITGB3 binds to FGF1 and this binding is essential for FGF1 signaling. ITGAV:ITGB3 binds to FGF2 and this binding is essential for FGF2 signaling. ITGAV:ITGB3 binds to IGF1 and this binding is essential for IGF1 signaling. ITGAV:ITGB3 binds to IGF2 and this binding is essential for IGF2 signaling. ITGAV:ITGB3 binds to IL1B and this binding is essential for IL1B signaling. ITGAV:ITGB3 binds to PLA2G2A via a site (site 2) which is distinct from the classical ligand-binding site (site 1) and this induces integrin conformational changes and enhanced ligand binding to site 1. ITGAV:ITGB3 acts as a receptor for fibrillin-1 (FBN1) and mediates R-G-D-dependent cell adhesion to FBN1. In brain, plays a role in synaptic transmission and plasticity. Involved in the regulation of the serotonin neurotransmission, is required to localize to specific compartments within the synapse the serotonin receptor SLC6A4 and for an appropriate reuptake of serotonin. Controls excitatory synaptic strength by regulating GRIA2-containing AMPAR endocytosis, which affects AMPAR abundance and composition. ITGAV:ITGB3 acts as a receptor for CD40LG. ITGAV:ITGB3 acts as a receptor for IBSP and promotes cell adhesion and migration to IBSP. In Rattus norvegicus (Rat), this protein is Integrin beta-3.